The primary structure comprises 285 residues: Probable adenylate kinase 6, chloroplastic (285 aa).

A chloroplast-targeting transit peptide spans 1–33 (MAAISRAIRACAAAGSRRSMASSAKEVAAAGAR). Residue 63-68 (GVGKGT) coordinates ATP. An NMP region spans residues 83–112 (ATGDLVRDALASPGPFSEQLAEIVNNGKLV). AMP-binding positions include threonine 84, arginine 89, 110–112 (KLV), 140–143 (GFPR), and glutamine 147. The segment at 176 to 224 (GRRMCSQCGGNFNVASIDMEGENGGPRMYMPPLLPPPQCESKLITRPDD) is LID. Residues arginine 177 and 186–187 (NF) contribute to the ATP site. Residues arginine 221 and arginine 232 each coordinate AMP.

This sequence belongs to the adenylate kinase family.

It localises to the plastid. The protein localises to the chloroplast. It carries out the reaction AMP + ATP = 2 ADP. In terms of biological role, catalyzes the reversible transfer of the terminal phosphate group between ATP and AMP. Plays an important role in cellular energy homeostasis and in adenine nucleotide metabolism. This chain is Probable adenylate kinase 6, chloroplastic, found in Oryza sativa subsp. japonica (Rice).